We begin with the raw amino-acid sequence, 262 residues long: tRNA pseudouridine synthase A (262 aa).

The active-site Nucleophile is the Asp51. Tyr109 is a substrate binding site.

The protein belongs to the tRNA pseudouridine synthase TruA family. In terms of assembly, homodimer.

The enzyme catalyses uridine(38/39/40) in tRNA = pseudouridine(38/39/40) in tRNA. Formation of pseudouridine at positions 38, 39 and 40 in the anticodon stem and loop of transfer RNAs. In Aliivibrio salmonicida (strain LFI1238) (Vibrio salmonicida (strain LFI1238)), this protein is tRNA pseudouridine synthase A.